Reading from the N-terminus, the 256-residue chain is tRNA-cytidine(32) 2-sulfurtransferase (256 aa).

A PP-loop motif motif is present at residues 35–40; it reads SGGKDS. [4Fe-4S] cluster contacts are provided by cysteine 110, cysteine 113, and cysteine 201.

It belongs to the TtcA family. Homodimer. Mg(2+) is required as a cofactor. [4Fe-4S] cluster serves as cofactor.

It localises to the cytoplasm. The enzyme catalyses cytidine(32) in tRNA + S-sulfanyl-L-cysteinyl-[cysteine desulfurase] + AH2 + ATP = 2-thiocytidine(32) in tRNA + L-cysteinyl-[cysteine desulfurase] + A + AMP + diphosphate + H(+). Its pathway is tRNA modification. Catalyzes the ATP-dependent 2-thiolation of cytidine in position 32 of tRNA, to form 2-thiocytidine (s(2)C32). The sulfur atoms are provided by the cysteine/cysteine desulfurase (IscS) system. In Coxiella burnetii (strain RSA 493 / Nine Mile phase I), this protein is tRNA-cytidine(32) 2-sulfurtransferase.